Consider the following 154-residue polypeptide: Ribonuclease K6 (154 aa).

The N-terminal stretch at M1–A27 is a signal peptide. The active-site Proton acceptor is the H42. 4 cysteine pairs are disulfide-bonded: C50/C108, C64/C118, C82/C133, and C89/C96. N59 carries N-linked (GlcNAc...) asparagine glycosylation. Substrate contacts are provided by residues K65–T69 and K90. An N-linked (GlcNAc...) asparagine glycan is attached at N104. H149 serves as the catalytic Proton donor.

It belongs to the pancreatic ribonuclease family. As to quaternary structure, interacts (via N-terminus) with bacterial lipopolysaccharide (LPS). In terms of tissue distribution, kidney (at protein level).

The protein localises to the secreted. The protein resides in the lysosome. It localises to the cytoplasmic granule. Its function is as follows. Ribonuclease which shows a preference for the pyrimidines uridine and cytosine. Has potent antimicrobial activity against a range of Gram-positive and Gram-negative bacteria, including P.aeruginosa, A.baumanii, M.luteus, S.aureus, E.faecalis, E.faecium, S.saprophyticus and E.coli. Causes loss of bacterial membrane integrity, and also promotes agglutination of Gram-negative bacteria. Probably contributes to urinary tract sterility. Bactericidal activity is independent of RNase activity. The chain is Ribonuclease K6 (RNASE6) from Bos taurus (Bovine).